A 205-amino-acid chain; its full sequence is DNA-directed RNA polymerase RPB5 homolog (205 aa).

Belongs to the archaeal RpoH/eukaryotic RPB5 RNA polymerase subunit family. In terms of assembly, part of the viral DNA-directed RNA polymerase that consists of 8 polII-like subunits (RPB1, RPB2, RPB3, RPB5, RPB6, RPB7, RPB9, RPB10), a capping enzyme and a termination factor.

It localises to the host cytoplasm. Its subcellular location is the virion. Its function is as follows. Component of the DNA-directed RNA polymerase (RNAP) that catalyzes the transcription in the cytoplasm of viral DNA into RNA using the four ribonucleoside triphosphates as substrates. This chain is DNA-directed RNA polymerase RPB5 homolog, found in Ornithodoros (relapsing fever ticks).